A 513-amino-acid chain; its full sequence is Sugar transport protein 7 (513 aa).

The Cytoplasmic segment spans residues 1–26 (MAGGSFGPTGVAKERAEQYQGKVTSY). The next 12 membrane-spanning stretches (helical) occupy residues 27–47 (VIIA…DIGI), 84–104 (GLAA…LVAS), 121–141 (ISFL…MLLA), 144–164 (IMLG…LSEV), 171–191 (GGLN…ANMV), 205–225 (LSLG…YFLP), 286–306 (LVMA…SILF), 324–344 (YSSA…IGLV), 351–371 (ALLI…AVIL), 387–407 (VIVV…WGPL), 427–447 (ITVA…LGLL), and 452–472 (FGIF…VYFL). Over 473–513 (LPETKGVPIEEMTLLWSKHWFWKKVLPDATNLEDESKNVSV) the chain is Cytoplasmic.

It belongs to the major facilitator superfamily. Sugar transporter (TC 2.A.1.1) family.

The protein resides in the cell membrane. Functionally, mediates an active uptake of hexoses, probably by sugar/hydrogen symport. This chain is Sugar transport protein 7 (STP7), found in Arabidopsis thaliana (Mouse-ear cress).